Reading from the N-terminus, the 416-residue chain is D-amino acid dehydrogenase (416 aa).

Residue 3 to 17 (VIVLGAGIVGVTSAY) participates in FAD binding.

Belongs to the DadA oxidoreductase family. FAD is required as a cofactor.

The enzyme catalyses a D-alpha-amino acid + A + H2O = a 2-oxocarboxylate + AH2 + NH4(+). It participates in amino-acid degradation; D-alanine degradation; NH(3) and pyruvate from D-alanine: step 1/1. In terms of biological role, oxidative deamination of D-amino acids. The protein is D-amino acid dehydrogenase of Rhizobium johnstonii (strain DSM 114642 / LMG 32736 / 3841) (Rhizobium leguminosarum bv. viciae).